Consider the following 369-residue polypeptide: Leucine carboxyl methyltransferase 1 (369 aa).

S-adenosyl-L-methionine is bound by residues R84, G108, D132, 187–188, and E215; that span reads DL.

It belongs to the methyltransferase superfamily. LCMT family.

It catalyses the reaction [phosphatase 2A protein]-C-terminal L-leucine + S-adenosyl-L-methionine = [phosphatase 2A protein]-C-terminal L-leucine methyl ester + S-adenosyl-L-homocysteine. In terms of biological role, methylates the carboxyl group of the C-terminal leucine residue of protein phosphatase 2A catalytic subunits to form alpha-leucine ester residues. In Debaryomyces hansenii (strain ATCC 36239 / CBS 767 / BCRC 21394 / JCM 1990 / NBRC 0083 / IGC 2968) (Yeast), this protein is Leucine carboxyl methyltransferase 1 (PPM1).